The following is a 344-amino-acid chain: Methionine import ATP-binding protein MetN 1 (344 aa).

The ABC transporter domain maps to Ile2–Ile241. Gly38 to Ser45 serves as a coordination point for ATP.

The protein belongs to the ABC transporter superfamily. Methionine importer (TC 3.A.1.24) family. As to quaternary structure, the complex is composed of two ATP-binding proteins (MetN), two transmembrane proteins (MetI) and a solute-binding protein (MetQ).

The protein localises to the cell inner membrane. It catalyses the reaction L-methionine(out) + ATP + H2O = L-methionine(in) + ADP + phosphate + H(+). The enzyme catalyses D-methionine(out) + ATP + H2O = D-methionine(in) + ADP + phosphate + H(+). In terms of biological role, part of the ABC transporter complex MetNIQ involved in methionine import. Responsible for energy coupling to the transport system. This chain is Methionine import ATP-binding protein MetN 1, found in Burkholderia orbicola (strain AU 1054).